We begin with the raw amino-acid sequence, 610 residues long: Estrogen receptor beta-2 (610 aa).

A modulating region spans residues 1 to 170 (MSSSTGPAPA…GILGKGDTHF (170 aa)). 2 consecutive NR C4-type zinc fingers follow at residues 171–191 (CAVC…CEGC) and 207–231 (CPAT…LRKC). Positions 171–236 (CAVCHDYASG…RLRKCYEVGM (66 aa)) form a DNA-binding region, nuclear receptor. An NR LBD domain is found at 302–538 (SPEQLVNCIL…DLLLEMLDAN (237 aa)). A disordered region spans residues 566–596 (HTSKQQPALKESNQDTRHSPQAEGTVDKTLH). Basic and acidic residues predominate over residues 577-596 (SNQDTRHSPQAEGTVDKTLH).

It belongs to the nuclear hormone receptor family. NR3 subfamily. Binds DNA as a homodimer. Can form a heterodimer with ER-alpha. As to expression, predominantly expressed in pituitary, telencephalon and hypothalamus as well as in the liver.

Its subcellular location is the nucleus. Its function is as follows. Binds estrogens with an affinity similar to that of ER-alpha, and activates expression of reporter genes containing estrogen response elements (ERE) in an estrogen-dependent manner. This Carassius auratus (Goldfish) protein is Estrogen receptor beta-2 (esr2b).